The chain runs to 101 residues: Large ribosomal subunit protein bL28 (101 aa).

It belongs to the bacterial ribosomal protein bL28 family.

In Methylorubrum extorquens (strain CM4 / NCIMB 13688) (Methylobacterium extorquens), this protein is Large ribosomal subunit protein bL28.